Reading from the N-terminus, the 566-residue chain is Arginine--tRNA ligase (566 aa).

A 'HIGH' region motif is present at residues 124 to 134 (ANPNGPLHIGH).

The protein belongs to the class-I aminoacyl-tRNA synthetase family.

It localises to the cytoplasm. The catalysed reaction is tRNA(Arg) + L-arginine + ATP = L-arginyl-tRNA(Arg) + AMP + diphosphate. In Methanocaldococcus jannaschii (strain ATCC 43067 / DSM 2661 / JAL-1 / JCM 10045 / NBRC 100440) (Methanococcus jannaschii), this protein is Arginine--tRNA ligase (argS).